The chain runs to 720 residues: Polyribonucleotide nucleotidyltransferase (720 aa).

The Mg(2+) site is built by Asp-487 and Asp-493. Positions 554 to 613 (PRITTISIPKEKIREVIGTGGKVIREICEQTGAKIDIDDDGTIKVASVDADAAQRAIDWI) constitute a KH domain. The 69-residue stretch at 623 to 691 (GVIYNGKVVK…DRGKVKLSMK (69 aa)) folds into the S1 motif domain. Positions 695 to 720 (QTTGEDISAQLEAERAASKRERHHED) are disordered. Residues 706-720 (EAERAASKRERHHED) show a composition bias toward basic and acidic residues.

Belongs to the polyribonucleotide nucleotidyltransferase family. Mg(2+) is required as a cofactor.

The protein resides in the cytoplasm. The enzyme catalyses RNA(n+1) + phosphate = RNA(n) + a ribonucleoside 5'-diphosphate. Functionally, involved in mRNA degradation. Catalyzes the phosphorolysis of single-stranded polyribonucleotides processively in the 3'- to 5'-direction. The chain is Polyribonucleotide nucleotidyltransferase from Paramagnetospirillum magneticum (strain ATCC 700264 / AMB-1) (Magnetospirillum magneticum).